Here is a 1234-residue protein sequence, read N- to C-terminus: DNA-directed RNA polymerase subunit beta (1234 aa).

The protein belongs to the RNA polymerase beta chain family. As to quaternary structure, the RNAP catalytic core consists of 2 alpha, 1 beta, 1 beta' and 1 omega subunit. When a sigma factor is associated with the core the holoenzyme is formed, which can initiate transcription.

The enzyme catalyses RNA(n) + a ribonucleoside 5'-triphosphate = RNA(n+1) + diphosphate. Its function is as follows. DNA-dependent RNA polymerase catalyzes the transcription of DNA into RNA using the four ribonucleoside triphosphates as substrates. This chain is DNA-directed RNA polymerase subunit beta, found in Clostridium perfringens (strain SM101 / Type A).